Consider the following 530-residue polypeptide: C2H2-type transcription factor MSN2 (530 aa).

C2H2-type zinc fingers lie at residues 409–437 (FVCD…QEKP) and 438–465 (FECN…SGGA).

It is found in the nucleus. It localises to the cytoplasm. Transcription factor that acts as a key downstream transcription factor in the HOG1-MAPK pathway. Plays crucial roles in the regulation of dimorphism transition, aggravated pigmentation, conidiation, microsclerotia formation and subsequent virulence towards Spodoptera litura larvae. More specifically regulates the expression of genes involved in antioxidation, pigment biosynthesis and ion transport and storage. The chain is C2H2-type transcription factor MSN2 from Metarhizium rileyi (strain RCEF 4871) (Nomuraea rileyi).